Here is a 426-residue protein sequence, read N- to C-terminus: 3-phosphoshikimate 1-carboxyvinyltransferase (426 aa).

3-phosphoshikimate contacts are provided by K20, S21, and R25. K20 contacts phosphoenolpyruvate. Residues G92 and R120 each contribute to the phosphoenolpyruvate site. 4 residues coordinate 3-phosphoshikimate: S166, Q168, D312, and K339. Q168 lines the phosphoenolpyruvate pocket. Residue D312 is the Proton acceptor of the active site. Residues R343 and R385 each coordinate phosphoenolpyruvate.

This sequence belongs to the EPSP synthase family. As to quaternary structure, monomer.

It is found in the cytoplasm. The enzyme catalyses 3-phosphoshikimate + phosphoenolpyruvate = 5-O-(1-carboxyvinyl)-3-phosphoshikimate + phosphate. It participates in metabolic intermediate biosynthesis; chorismate biosynthesis; chorismate from D-erythrose 4-phosphate and phosphoenolpyruvate: step 6/7. Functionally, catalyzes the transfer of the enolpyruvyl moiety of phosphoenolpyruvate (PEP) to the 5-hydroxyl of shikimate-3-phosphate (S3P) to produce enolpyruvyl shikimate-3-phosphate and inorganic phosphate. This chain is 3-phosphoshikimate 1-carboxyvinyltransferase, found in Enterococcus faecalis (strain ATCC 700802 / V583).